The sequence spans 345 residues: Anthranilate phosphoribosyltransferase (345 aa).

5-phospho-alpha-D-ribose 1-diphosphate contacts are provided by residues Gly-84, 87-88 (GD), Thr-92, 94-97 (NIST), 112-120 (KHGNRSVSS), and Ser-124. Residue Gly-84 participates in anthranilate binding. Position 96 (Ser-96) interacts with Mg(2+). Asn-115 contacts anthranilate. Residue Arg-170 participates in anthranilate binding. Residues Asp-229 and Glu-230 each coordinate Mg(2+).

The protein belongs to the anthranilate phosphoribosyltransferase family. In terms of assembly, homodimer. It depends on Mg(2+) as a cofactor.

It carries out the reaction N-(5-phospho-beta-D-ribosyl)anthranilate + diphosphate = 5-phospho-alpha-D-ribose 1-diphosphate + anthranilate. Its pathway is amino-acid biosynthesis; L-tryptophan biosynthesis; L-tryptophan from chorismate: step 2/5. Its function is as follows. Catalyzes the transfer of the phosphoribosyl group of 5-phosphorylribose-1-pyrophosphate (PRPP) to anthranilate to yield N-(5'-phosphoribosyl)-anthranilate (PRA). The sequence is that of Anthranilate phosphoribosyltransferase from Xanthomonas euvesicatoria pv. vesicatoria (strain 85-10) (Xanthomonas campestris pv. vesicatoria).